The chain runs to 350 residues: D-alanine--D-alanine ligase (350 aa).

The 202-residue stretch at 133–334 (NDIFELNKIP…VSEVFDNLIG (202 aa)) folds into the ATP-grasp domain. 161–216 (FEKTSKAVYVKPCNAGSSVGVMRAETEEELEKAIQNAFQYDRRILVEEEIIGPELQ) contacts ATP. Positions 288, 300, and 302 each coordinate Mg(2+).

This sequence belongs to the D-alanine--D-alanine ligase family. Mg(2+) is required as a cofactor. It depends on Mn(2+) as a cofactor.

The protein resides in the cytoplasm. It carries out the reaction 2 D-alanine + ATP = D-alanyl-D-alanine + ADP + phosphate + H(+). It participates in cell wall biogenesis; peptidoglycan biosynthesis. In terms of biological role, cell wall formation. This is D-alanine--D-alanine ligase from Finegoldia magna (strain ATCC 29328 / DSM 20472 / WAL 2508) (Peptostreptococcus magnus).